The chain runs to 44 residues: Defensin heliomicin (44 aa).

Intrachain disulfides connect Cys-7–Cys-32, Cys-18–Cys-40, and Cys-22–Cys-42.

It localises to the secreted. In terms of biological role, this peptide has potent anti-fungal activity. Has no activity against Gram-negative and Gram-positive bacteria. The chain is Defensin heliomicin from Heliothis virescens (Tobacco budworm moth).